A 624-amino-acid chain; its full sequence is tRNA uridine 5-carboxymethylaminomethyl modification enzyme MnmG (624 aa).

14–19 (GAGHAG) contacts FAD. 273–287 (GTRYCPSFEDKVVRF) provides a ligand contact to NAD(+).

Belongs to the MnmG family. As to quaternary structure, homodimer. Heterotetramer of two MnmE and two MnmG subunits. Requires FAD as cofactor.

The protein resides in the cytoplasm. In terms of biological role, NAD-binding protein involved in the addition of a carboxymethylaminomethyl (cmnm) group at the wobble position (U34) of certain tRNAs, forming tRNA-cmnm(5)s(2)U34. The sequence is that of tRNA uridine 5-carboxymethylaminomethyl modification enzyme MnmG from Syntrophomonas wolfei subsp. wolfei (strain DSM 2245B / Goettingen).